The primary structure comprises 873 residues: Putative receptor-like protein kinase At5g39000 (873 aa).

The first 21 residues, 1–21 (MIRHALLIFSILVSTPIVGEG), serve as a signal peptide directing secretion. The Extracellular segment spans residues 22–445 (ATSTYEPTDV…KNKSHILPIT (424 aa)). N-linked (GlcNAc...) asparagine glycosylation is found at Asn-49, Asn-64, Asn-138, Asn-168, Asn-216, Asn-266, Asn-300, Asn-340, and Asn-437. The chain crosses the membrane as a helical span at residues 446-466 (LAVVGSLVVLAMFVVGVLVIM). The Cytoplasmic segment spans residues 467–873 (KKKKKSKPST…FSEINEPKAR (407 aa)). A disordered region spans residues 472–494 (SKPSTNSSWCPLPHGTDSTNTKP). The Protein kinase domain maps to 518-803 (FEDKLIIGVG…EFALQLHETA (286 aa)). ATP is bound by residues 524–532 (IGVGGFGSV) and Lys-547. Catalysis depends on Asp-646, which acts as the Proton acceptor. Residues 813-843 (LDLMPSGEVGTTTDGEDDLFSRTTGHVGKST) are disordered. Over residues 833-843 (SRTTGHVGKST) the composition is skewed to polar residues.

The protein belongs to the protein kinase superfamily. Ser/Thr protein kinase family.

It localises to the membrane. This chain is Putative receptor-like protein kinase At5g39000, found in Arabidopsis thaliana (Mouse-ear cress).